A 702-amino-acid polypeptide reads, in one-letter code: Polyribonucleotide nucleotidyltransferase (702 aa).

Mg(2+)-binding residues include Asp-484 and Asp-490. Residues 551–610 form the KH domain; the sequence is PHIESFKIAVEKIGALIGPGGKTVKSLSDQYRVTINTDSDGTVTVSGRDAQSVFDAKVAV. Residues 620-688 form the S1 motif domain; it reads GRVYQGVVKR…RMGRLNLSYI (69 aa).

This sequence belongs to the polyribonucleotide nucleotidyltransferase family. Requires Mg(2+) as cofactor.

The protein localises to the cytoplasm. It catalyses the reaction RNA(n+1) + phosphate = RNA(n) + a ribonucleoside 5'-diphosphate. Functionally, involved in mRNA degradation. Catalyzes the phosphorolysis of single-stranded polyribonucleotides processively in the 3'- to 5'-direction. This is Polyribonucleotide nucleotidyltransferase from Treponema pallidum (strain Nichols).